A 294-amino-acid chain; its full sequence is 4-hydroxy-tetrahydrodipicolinate synthase (294 aa).

Thr45 contacts pyruvate. Tyr133 acts as the Proton donor/acceptor in catalysis. Lys162 (schiff-base intermediate with substrate) is an active-site residue. Ile204 contacts pyruvate.

It belongs to the DapA family. Homotetramer; dimer of dimers.

The protein resides in the cytoplasm. It catalyses the reaction L-aspartate 4-semialdehyde + pyruvate = (2S,4S)-4-hydroxy-2,3,4,5-tetrahydrodipicolinate + H2O + H(+). Its pathway is amino-acid biosynthesis; L-lysine biosynthesis via DAP pathway; (S)-tetrahydrodipicolinate from L-aspartate: step 3/4. In terms of biological role, catalyzes the condensation of (S)-aspartate-beta-semialdehyde [(S)-ASA] and pyruvate to 4-hydroxy-tetrahydrodipicolinate (HTPA). In Bartonella quintana (strain Toulouse) (Rochalimaea quintana), this protein is 4-hydroxy-tetrahydrodipicolinate synthase.